The primary structure comprises 445 residues: Glutamate-1-semialdehyde 2,1-aminomutase (445 aa).

K263 carries the post-translational modification N6-(pyridoxal phosphate)lysine.

This sequence belongs to the class-III pyridoxal-phosphate-dependent aminotransferase family. HemL subfamily. Requires pyridoxal 5'-phosphate as cofactor.

It localises to the cytoplasm. It carries out the reaction (S)-4-amino-5-oxopentanoate = 5-aminolevulinate. Its pathway is porphyrin-containing compound metabolism; protoporphyrin-IX biosynthesis; 5-aminolevulinate from L-glutamyl-tRNA(Glu): step 2/2. This Halorubrum lacusprofundi (strain ATCC 49239 / DSM 5036 / JCM 8891 / ACAM 34) protein is Glutamate-1-semialdehyde 2,1-aminomutase.